A 182-amino-acid polypeptide reads, in one-letter code: Ribosome maturation factor RimM (182 aa).

Residues Asp-99 to Thr-176 enclose the PRC barrel domain.

This sequence belongs to the RimM family. In terms of assembly, binds ribosomal protein uS19.

The protein resides in the cytoplasm. In terms of biological role, an accessory protein needed during the final step in the assembly of 30S ribosomal subunit, possibly for assembly of the head region. Essential for efficient processing of 16S rRNA. May be needed both before and after RbfA during the maturation of 16S rRNA. It has affinity for free ribosomal 30S subunits but not for 70S ribosomes. The chain is Ribosome maturation factor RimM from Rhodopseudomonas palustris (strain HaA2).